A 238-amino-acid polypeptide reads, in one-letter code: Thrombin-like enzyme gyroxin B2.1 (238 aa).

The Peptidase S1 domain maps to 1–229; that stretch reads VIGGDECNIN…HLDWIQNIIA (229 aa). 6 disulfides stabilise this stretch: C7–C141, C28–C44, C78–C236, C120–C190, C152–C169, and C180–C205. H43 functions as the Charge relay system in the catalytic mechanism. N-linked (GlcNAc...) asparagine glycosylation occurs at N81. D88 (charge relay system) is an active-site residue. Residue S184 is the Charge relay system of the active site.

This sequence belongs to the peptidase S1 family. Snake venom subfamily. In terms of assembly, monomer. In terms of tissue distribution, expressed by the venom gland.

The protein resides in the secreted. Its function is as follows. Thrombin-like snake venom serine protease. Displays a specificity similar to trypsin. Releases only fibrinopeptide A in the conversion of fibrinogen (FGA) to fibrin. Shows coagulant, esterase and amidase activities. Reversibly increases the permeability of the blood brain barrier (BBB) in mice. Induces the barrel rotation syndrome in mice, which is manifested by gyroxin-like, rapid rolling motions. This syndrome may be due to its effect on BBB permeability, and certainly also to other actions affecting endogenous substrates present in the endothelium, nervous tissues or blood. This is Thrombin-like enzyme gyroxin B2.1 from Crotalus durissus terrificus (South American rattlesnake).